Here is a 187-residue protein sequence, read N- to C-terminus: Putative manganese efflux pump MntP (187 aa).

The next 6 membrane-spanning stretches (helical) occupy residues 3-23 (FYSLIFLSCALGMDAFAVSLC), 35-55 (HYLIVGIYFGGFQALMPTIGY), 56-76 (FIGITFASFIASIDHWIAFIL), 107-127 (LALAIATSIDALAVGVSFAFL), 129-149 (VNLLLAIFLIGIITFILCIIA), and 166-186 (LLGGLVLIILGVKILIEHLFF).

The protein belongs to the MntP (TC 9.B.29) family.

The protein localises to the cell inner membrane. Functionally, probably functions as a manganese efflux pump. The chain is Putative manganese efflux pump MntP from Campylobacter jejuni (strain RM1221).